A 1286-amino-acid polypeptide reads, in one-letter code: 5-oxoprolinase (1286 aa).

A phosphoserine mark is found at S930 and S1077.

This sequence belongs to the oxoprolinase family. In terms of assembly, homodimer.

The protein resides in the cytoplasm. It carries out the reaction 5-oxo-L-proline + ATP + 2 H2O = L-glutamate + ADP + phosphate + H(+). Catalyzes the cleavage of 5-oxo-L-proline to form L-glutamate coupled to the hydrolysis of ATP to ADP and inorganic phosphate. The protein is 5-oxoprolinase (OXP1) of Saccharomyces cerevisiae (strain ATCC 204508 / S288c) (Baker's yeast).